The sequence spans 202 residues: Orotate phosphoribosyltransferase (202 aa).

Residue 113-121 participates in 5-phospho-alpha-D-ribose 1-diphosphate binding; the sequence is EDIITTGGS. The orotate site is built by Thr117 and Arg145.

The protein belongs to the purine/pyrimidine phosphoribosyltransferase family. PyrE subfamily. As to quaternary structure, homodimer. Mg(2+) is required as a cofactor.

The catalysed reaction is orotidine 5'-phosphate + diphosphate = orotate + 5-phospho-alpha-D-ribose 1-diphosphate. It participates in pyrimidine metabolism; UMP biosynthesis via de novo pathway; UMP from orotate: step 1/2. Its function is as follows. Catalyzes the transfer of a ribosyl phosphate group from 5-phosphoribose 1-diphosphate to orotate, leading to the formation of orotidine monophosphate (OMP). This Nitratiruptor sp. (strain SB155-2) protein is Orotate phosphoribosyltransferase.